Here is a 185-residue protein sequence, read N- to C-terminus: Elongation factor P (185 aa).

This sequence belongs to the elongation factor P family.

The protein resides in the cytoplasm. It functions in the pathway protein biosynthesis; polypeptide chain elongation. Involved in peptide bond synthesis. Stimulates efficient translation and peptide-bond synthesis on native or reconstituted 70S ribosomes in vitro. Probably functions indirectly by altering the affinity of the ribosome for aminoacyl-tRNA, thus increasing their reactivity as acceptors for peptidyl transferase. This Burkholderia lata (strain ATCC 17760 / DSM 23089 / LMG 22485 / NCIMB 9086 / R18194 / 383) protein is Elongation factor P.